A 353-amino-acid chain; its full sequence is Inactive ADP-ribosyltransferase ARH2 (353 aa).

Ser27 is modified (phosphoserine).

It belongs to the ADP-ribosylglycohydrolase family.

It localises to the cytoplasm. The protein resides in the myofibril. Its subcellular location is the sarcomere. Required for myofibril assembly and outgrowth of the cardiac chambers in the developing heart. Appears to be catalytically inactive, showing no activity against O-acetyl-ADP-ribose. This is Inactive ADP-ribosyltransferase ARH2 (Adprhl1) from Rattus norvegicus (Rat).